A 559-amino-acid chain; its full sequence is Prolyl 4-hydroxylase subunit alpha-1 (559 aa).

The signal sequence occupies residues 1–16 (MRLALLVLATIGYAVA). The N-linked (GlcNAc...) asparagine glycan is linked to asparagine 158. The 109-residue stretch at 404–512 (TAEELQIANY…KWVSNKWIHE (109 aa)) folds into the Fe2OG dioxygenase domain. Fe cation contacts are provided by histidine 422, aspartate 424, and histidine 493. Residue lysine 503 participates in 2-oxoglutarate binding.

Belongs to the P4HA family. Heterotetramer of two alpha chains and two beta chains. Exists either as a phy-1(2)/pdi-2(2) tetramer or as a phy-1/phy-2/pdi-2(2) tetramer. Requires Fe(2+) as cofactor. L-ascorbate serves as cofactor.

It localises to the endoplasmic reticulum lumen. The enzyme catalyses L-prolyl-[collagen] + 2-oxoglutarate + O2 = trans-4-hydroxy-L-prolyl-[collagen] + succinate + CO2. Its function is as follows. Catalyzes the post-translational formation of 4-hydroxyproline in -Xaa-Pro-Gly- sequences in collagens and other proteins. The protein is Prolyl 4-hydroxylase subunit alpha-1 (dpy-18) of Caenorhabditis elegans.